Consider the following 308-residue polypeptide: Flavonol synthase 3 (308 aa).

One can recognise a Fe2OG dioxygenase domain in the interval 167–267 (TIEYLMKINY…RISWPVFVES (101 aa)). 2-oxoglutarate is bound at residue 175-177 (NYY). The Fe cation site is built by H192, D194, and H248. 258–260 (RIS) is a binding site for 2-oxoglutarate.

Belongs to the iron/ascorbate-dependent oxidoreductase family. Requires Fe(2+) as cofactor. Widely expressed at low levels.

The enzyme catalyses a (2R,3R)-dihydroflavonol + 2-oxoglutarate + O2 = a flavonol + succinate + CO2 + H2O. The protein operates within secondary metabolite biosynthesis; flavonoid biosynthesis. In terms of biological role, catalyzes the formation of flavonols from dihydroflavonols. Possesses low activity in vitro towards dihydrokaempferol and dihydroquercetin producing kaempferol and quercitin, respectively. This chain is Flavonol synthase 3, found in Arabidopsis thaliana (Mouse-ear cress).